The sequence spans 700 residues: Sex comb on midleg-like protein 2 (700 aa).

The interval 1–33 is disordered; sequence MGQTVNEDSMDVKKENQEKTPQSSTSSVQRDDF. Over residues 19-28 the composition is skewed to polar residues; it reads KTPQSSTSSV. MBT repeat units lie at residues 33–131 and 139–240; these read FHWE…LQPP and SSWP…LQPP. Positions 253–281 are enriched in polar residues; the sequence is TESSPSEASQHSMQSPQKTTLILPTQQVR. 2 disordered regions span residues 253-320 and 466-550; these read TESS…EKPL and PFSS…SSLN. Residues serine 256, serine 261, serine 267, serine 299, and serine 300 each carry the phosphoserine modification. A Phosphothreonine modification is found at threonine 305. Residues 476-495 are compositionally biased toward basic and acidic residues; the sequence is SSAEHDKNQSAKEDVTERQS. Residue serine 499 is modified to Phosphoserine. Threonine 503 is modified (phosphothreonine). Serine 511 bears the Phosphoserine mark. Lysine 518 is covalently cross-linked (Glycyl lysine isopeptide (Lys-Gly) (interchain with G-Cter in SUMO2)). Serine 522 carries the phosphoserine modification. Over residues 535–545 the composition is skewed to basic and acidic residues; it reads PKEENLSEDSK. Residue lysine 536 forms a Glycyl lysine isopeptide (Lys-Gly) (interchain with G-Cter in SUMO2) linkage. Residues serine 570, serine 583, serine 590, and serine 594 each carry the phosphoserine modification. Polar residues predominate over residues 575-584; the sequence is RSVPGTTSSP. The disordered stretch occupies residues 575-594; it reads RSVPGTTSSPLVGDISPKSS. Glycyl lysine isopeptide (Lys-Gly) (interchain with G-Cter in SUMO2) cross-links involve residues lysine 599 and lysine 605. The 70-residue stretch at 631–700 folds into the SAM domain; the sequence is WSVDEVIQFM…IEKLKEGKYS (70 aa).

It belongs to the SCM family. In terms of tissue distribution, highly expressed in placenta, thymus and testis. Detected at lower levels in brain, liver, skeletal muscle, pancreas and ovary.

The protein resides in the nucleus. Functionally, putative Polycomb group (PcG) protein. PcG proteins act by forming multiprotein complexes, which are required to maintain the transcriptionally repressive state of homeotic genes throughout development. This is Sex comb on midleg-like protein 2 (SCML2) from Homo sapiens (Human).